The sequence spans 200 residues: Recombination protein RecR (200 aa).

Residues 60-75 form a C4-type zinc finger; sequence CVYCQALTEDDVCNIC. A Toprim domain is found at 83-177; the sequence is TKLCIIESML…KISRIGFGVP (95 aa).

Belongs to the RecR family.

May play a role in DNA repair. It seems to be involved in an RecBC-independent recombinational process of DNA repair. It may act with RecF and RecO. The sequence is that of Recombination protein RecR from Francisella tularensis subsp. tularensis (strain SCHU S4 / Schu 4).